A 240-amino-acid chain; its full sequence is 1-acyl-sn-glycerol-3-phosphate acyltransferase (240 aa).

An HXXXXD motif motif is present at residues His-73–Asp-78.

The protein belongs to the 1-acyl-sn-glycerol-3-phosphate acyltransferase family.

The protein localises to the cell inner membrane. It carries out the reaction a 1-acyl-sn-glycero-3-phosphate + an acyl-CoA = a 1,2-diacyl-sn-glycero-3-phosphate + CoA. It functions in the pathway phospholipid metabolism; CDP-diacylglycerol biosynthesis; CDP-diacylglycerol from sn-glycerol 3-phosphate: step 2/3. Its function is as follows. Converts lysophosphatidic acid (LPA) into phosphatidic acid by incorporating acyl moiety at the 2 position. This chain is 1-acyl-sn-glycerol-3-phosphate acyltransferase (plsC), found in Haemophilus influenzae (strain ATCC 51907 / DSM 11121 / KW20 / Rd).